We begin with the raw amino-acid sequence, 332 residues long: MTLITPPFPTNRLRRMRRTEALRDLAQENRLSVKDLIWPIFITDVPGADVEISSMPGVVRRTMDGALKAAEGSRDAGHSRDLPVPLTDPAVKTETCEMAWQPDNFTNRVIAAMKQAVPEVAIMTDIALDPYNANGHDGLVRDGILLNDETTEALVKMALAQAAAGADILGPSDMMDGRVGAIRQAMEAAGHKDIAILSYAAKYASAFYGPFRDAVGASSALKGDKKTYQMNPANSAEALRNVARDIAEGADMVMVKPGMPYLDIVRQVKDAFGMPTYAYQVSGEYAMLMAAVQNGWLNHDKVMLESLMAFRRAGCDGVLTYFAPAAAKLIGA.

The Schiff-base intermediate with substrate role is filled by K202. 5-aminolevulinate-binding residues include R212 and K225. The active-site Schiff-base intermediate with substrate is the K256. The 5-aminolevulinate site is built by S282 and Y321.

It belongs to the ALAD family. Homohexamer.

The enzyme catalyses 2 5-aminolevulinate = porphobilinogen + 2 H2O + H(+). Its pathway is porphyrin-containing compound metabolism; protoporphyrin-IX biosynthesis; coproporphyrinogen-III from 5-aminolevulinate: step 1/4. Functionally, catalyzes an early step in the biosynthesis of tetrapyrroles. Binds two molecules of 5-aminolevulinate per subunit, each at a distinct site, and catalyzes their condensation to form porphobilinogen. The protein is Delta-aminolevulinic acid dehydratase (hemB) of Rhodobacter capsulatus (Rhodopseudomonas capsulata).